The following is a 284-amino-acid chain: Elongation factor Ts (284 aa).

Residues 80-83 (TDFV) are involved in Mg(2+) ion dislocation from EF-Tu.

The protein belongs to the EF-Ts family.

The protein localises to the cytoplasm. Its function is as follows. Associates with the EF-Tu.GDP complex and induces the exchange of GDP to GTP. It remains bound to the aminoacyl-tRNA.EF-Tu.GTP complex up to the GTP hydrolysis stage on the ribosome. The sequence is that of Elongation factor Ts from Neisseria meningitidis serogroup C (strain 053442).